The chain runs to 483 residues: Rhamnulokinase (483 aa).

11-15 (ASSGR) contributes to the ATP binding site. Substrate-binding positions include Gly79 and 234–236 (HDT). The active-site Proton acceptor is Asp235. ATP is bound at residue Thr257. Asn294 is a binding site for substrate. Gln302 contributes to the ATP binding site. Cysteines 352 and 369 form a disulfide. Residue Gly401 coordinates ATP.

Belongs to the rhamnulokinase family. Mg(2+) is required as a cofactor.

It catalyses the reaction L-rhamnulose + ATP = L-rhamnulose 1-phosphate + ADP + H(+). Its pathway is carbohydrate degradation; L-rhamnose degradation; glycerone phosphate from L-rhamnose: step 2/3. In terms of biological role, involved in the catabolism of L-rhamnose (6-deoxy-L-mannose). Catalyzes the transfer of the gamma-phosphate group from ATP to the 1-hydroxyl group of L-rhamnulose to yield L-rhamnulose 1-phosphate. This chain is Rhamnulokinase, found in Listeria innocua serovar 6a (strain ATCC BAA-680 / CLIP 11262).